The following is a 192-amino-acid chain: uncharacterized protein (192 aa).

Residues 1–17 (MFKKILFPLVALFMLAG) form the signal peptide. A lipid anchor (N-palmitoyl cysteine) is attached at cysteine 18. Cysteine 18 carries S-diacylglycerol cysteine lipidation.

This sequence to H.influenzae HI_0162.

It is found in the cell membrane. This is an uncharacterized protein from Escherichia coli O6:H1 (strain CFT073 / ATCC 700928 / UPEC).